A 336-amino-acid chain; its full sequence is Ketol-acid reductoisomerase (NADP(+)) 1 (336 aa).

Residues 2-181 (AKVYYEKDVT…GATRAGVLET (180 aa)) enclose the KARI N-terminal Rossmann domain. NADP(+) contacts are provided by residues 25–28 (YGSQ), R48, S52, and 82–85 (DELQ). Residue H107 is part of the active site. G133 is an NADP(+) binding site. Positions 182 to 327 (TFKEETETDL…RKLREMMPFV (146 aa)) constitute a KARI C-terminal knotted domain. The Mg(2+) site is built by D190, E194, E226, and E230. A substrate-binding site is contributed by S251.

It belongs to the ketol-acid reductoisomerase family. Mg(2+) serves as cofactor.

The catalysed reaction is (2R)-2,3-dihydroxy-3-methylbutanoate + NADP(+) = (2S)-2-acetolactate + NADPH + H(+). It carries out the reaction (2R,3R)-2,3-dihydroxy-3-methylpentanoate + NADP(+) = (S)-2-ethyl-2-hydroxy-3-oxobutanoate + NADPH + H(+). The protein operates within amino-acid biosynthesis; L-isoleucine biosynthesis; L-isoleucine from 2-oxobutanoate: step 2/4. It participates in amino-acid biosynthesis; L-valine biosynthesis; L-valine from pyruvate: step 2/4. In terms of biological role, involved in the biosynthesis of branched-chain amino acids (BCAA). Catalyzes an alkyl-migration followed by a ketol-acid reduction of (S)-2-acetolactate (S2AL) to yield (R)-2,3-dihydroxy-isovalerate. In the isomerase reaction, S2AL is rearranged via a Mg-dependent methyl migration to produce 3-hydroxy-3-methyl-2-ketobutyrate (HMKB). In the reductase reaction, this 2-ketoacid undergoes a metal-dependent reduction by NADPH to yield (R)-2,3-dihydroxy-isovalerate. In Bacillus cereus (strain ZK / E33L), this protein is Ketol-acid reductoisomerase (NADP(+)) 1.